The following is a 244-amino-acid chain: Phosphoadenosine 5'-phosphosulfate reductase (244 aa).

The Nucleophile; cysteine thiosulfonate intermediate role is filled by Cys239.

Belongs to the PAPS reductase family. CysH subfamily.

It localises to the cytoplasm. It catalyses the reaction [thioredoxin]-disulfide + sulfite + adenosine 3',5'-bisphosphate + 2 H(+) = [thioredoxin]-dithiol + 3'-phosphoadenylyl sulfate. It functions in the pathway sulfur metabolism; hydrogen sulfide biosynthesis; sulfite from sulfate: step 3/3. Its function is as follows. Catalyzes the formation of sulfite from phosphoadenosine 5'-phosphosulfate (PAPS) using thioredoxin as an electron donor. This is Phosphoadenosine 5'-phosphosulfate reductase from Escherichia coli O6:K15:H31 (strain 536 / UPEC).